The sequence spans 323 residues: Cyclin-H (323 aa).

A Phosphoserine; by CDK8 modification is found at Ser-5. Phosphoserine is present on Ser-132. The interval 299–323 is disordered; sequence DDDYVPKKSKHEEEEWTDDDLVESL. Over residues 302-311 the composition is skewed to basic and acidic residues; sequence YVPKKSKHEE. The segment covering 312–323 has biased composition (acidic residues); it reads EEWTDDDLVESL. Residue Thr-315 is modified to Phosphothreonine. Phosphoserine is present on Ser-322.

It belongs to the cyclin family. Cyclin C subfamily. Associates primarily with CDK7 and MAT1 to form the CAK complex. CAK can further associate with the core-TFIIH to form the TFIIH basal transcription factor.

The protein localises to the nucleus. In terms of biological role, regulates CDK7, the catalytic subunit of the CDK-activating kinase (CAK) enzymatic complex. CAK activates the cyclin-associated kinases CDK1, CDK2, CDK4 and CDK6 by threonine phosphorylation. CAK complexed to the core-TFIIH basal transcription factor activates RNA polymerase II by serine phosphorylation of the repetitive C-terminal domain (CTD) of its large subunit (POLR2A), allowing its escape from the promoter and elongation of the transcripts. Involved in cell cycle control and in RNA transcription by RNA polymerase II. Its expression and activity are constant throughout the cell cycle. The polypeptide is Cyclin-H (CCNH) (Macaca fascicularis (Crab-eating macaque)).